A 319-amino-acid polypeptide reads, in one-letter code: D-galacturonate reductase (319 aa).

Y58 functions as the Proton donor in the catalytic mechanism. Position 121 (H121) interacts with substrate. 216 to 275 (SPLGAARTKWGDDRVLGSDIIEEIAQAKGKSTAQISLRWVYEQGVSIVTKSYNKERMRQN) contributes to the NADP(+) binding site.

This sequence belongs to the aldo/keto reductase family. Expressed specifically in the receptacle tissue of the fruit.

It carries out the reaction L-galactonate + NADP(+) = aldehydo-D-galacturonate + NADPH + H(+). The protein operates within cofactor biosynthesis; L-ascorbate biosynthesis. Involved in ascorbic acid (vitamin C) biosynthesis. In Fragaria ananassa (Strawberry), this protein is D-galacturonate reductase (GALUR).